Reading from the N-terminus, the 393-residue chain is Probable hydrolase sll0100 (393 aa).

Belongs to the peptidase M20 family.

This is Probable hydrolase sll0100 from Synechocystis sp. (strain ATCC 27184 / PCC 6803 / Kazusa).